The sequence spans 61 residues: Large ribosomal subunit protein bL32 (61 aa).

It belongs to the bacterial ribosomal protein bL32 family.

This is Large ribosomal subunit protein bL32 from Ehrlichia chaffeensis (strain ATCC CRL-10679 / Arkansas).